A 397-amino-acid chain; its full sequence is Monooxygenase 1 (397 aa).

This sequence belongs to the 3-hydroxybenzoate 6-hydroxylase family. As to quaternary structure, monomer. The cofactor is FAD. As to expression, expressed in seedlings, roots, leaves, flowers and siliques.

The protein is Monooxygenase 1 of Arabidopsis thaliana (Mouse-ear cress).